The chain runs to 284 residues: MSAHTRITRKTVTAIRSTKGIGSLVSLTAYSAPMAKLVHDVADVIIVGDSVGMVLYGMPDTLRVTLDMMIAHGAAVVRGAAQACVVVDLPFSTFQESPAQAYRSAARLLAETGAQAVKLEGGCEMTDTIRFLTERGIPVMAHVGLMPQQANAAGGFRAQGMDPLSAAQVFDAACAAERAGAFSVVIEGTAEALARHLTGTLTIPTIGIGASPACDGQVLVTEDMIGAFDAYTPRFVKRYADANAVMRDAIRQYAHDVRHRVFPEPAHCFGYGKPLQLADAGATV.

D49 and D88 together coordinate Mg(2+). Residues 49–50 (DS), D88, and K118 each bind 3-methyl-2-oxobutanoate. E120 serves as a coordination point for Mg(2+). E187 (proton acceptor) is an active-site residue.

Belongs to the PanB family. In terms of assembly, homodecamer; pentamer of dimers. Requires Mg(2+) as cofactor.

The protein resides in the cytoplasm. It catalyses the reaction 3-methyl-2-oxobutanoate + (6R)-5,10-methylene-5,6,7,8-tetrahydrofolate + H2O = 2-dehydropantoate + (6S)-5,6,7,8-tetrahydrofolate. It functions in the pathway cofactor biosynthesis; (R)-pantothenate biosynthesis; (R)-pantoate from 3-methyl-2-oxobutanoate: step 1/2. Catalyzes the reversible reaction in which hydroxymethyl group from 5,10-methylenetetrahydrofolate is transferred onto alpha-ketoisovalerate to form ketopantoate. The sequence is that of 3-methyl-2-oxobutanoate hydroxymethyltransferase 2 from Burkholderia ambifaria (strain ATCC BAA-244 / DSM 16087 / CCUG 44356 / LMG 19182 / AMMD) (Burkholderia cepacia (strain AMMD)).